We begin with the raw amino-acid sequence, 318 residues long: L-carnitine dehydrogenase (318 aa).

14 to 19 is an NAD(+) binding site; it reads GSGVIG.

This sequence belongs to the 3-hydroxyacyl-CoA dehydrogenase family. L-carnitine dehydrogenase subfamily. As to quaternary structure, homodimer.

It is found in the cytoplasm. The catalysed reaction is carnitine + NAD(+) = 3-dehydrocarnitine + NADH + H(+). Its pathway is amine and polyamine metabolism; carnitine metabolism. In terms of biological role, catalyzes the NAD(+)-dependent oxidation of L-carnitine to 3-dehydrocarnitine. The polypeptide is L-carnitine dehydrogenase (Pseudomonas syringae pv. syringae (strain B728a)).